The sequence spans 406 residues: Tyrosine--tRNA ligase (406 aa).

Residue Tyr-35 participates in L-tyrosine binding. The short motif at 40–49 (PTADSLHIGH) is the 'HIGH' region element. L-tyrosine is bound by residues Tyr-168 and Gln-172. The short motif at 228–232 (KMGKT) is the 'KMSKS' region element. Residue Lys-231 coordinates ATP. The 67-residue stretch at 340–406 (CSVVELLVDI…KKNYNRIIIK (67 aa)) folds into the S4 RNA-binding domain.

It belongs to the class-I aminoacyl-tRNA synthetase family. TyrS type 1 subfamily. Homodimer.

The protein localises to the cytoplasm. The enzyme catalyses tRNA(Tyr) + L-tyrosine + ATP = L-tyrosyl-tRNA(Tyr) + AMP + diphosphate + H(+). In terms of biological role, catalyzes the attachment of tyrosine to tRNA(Tyr) in a two-step reaction: tyrosine is first activated by ATP to form Tyr-AMP and then transferred to the acceptor end of tRNA(Tyr). The protein is Tyrosine--tRNA ligase of Clostridium kluyveri (strain NBRC 12016).